Reading from the N-terminus, the 2195-residue chain is Integrator complex subunit 1 (2195 aa).

Residues 1–86 (MNRAKPTTVR…RPKLSSTPPL (86 aa)) form a disordered region. At Ser13 the chain carries Phosphoserine. Residues 34–45 (GQASESKTTSTL) are compositionally biased toward polar residues. Lys47 carries the post-translational modification N6-acetyllysine. The span at 62–75 (SASLSGTSALTGLT) shows a compositional bias: low complexity. Residue Thr83 is modified to Phosphothreonine. Ser87 is modified (phosphoserine). A disordered region spans residues 267 to 297 (LLQGEGARSGGELGAGSSPHPSLTEEEDSQT). Phosphoserine is present on residues Ser307 and Ser926. The segment at 923 to 947 (STASGEEDDEGESREQKAKKRQRQQ) is disordered. Residues 1165–1185 (HILVVHAMVILLTLGPPRSGD) form a helical membrane-spanning segment. The tract at residues 1313-1347 (SLPPRRDSTEAPKPESSPEPPPGQGRTRAGTQVPV) is disordered. A compositionally biased stretch (basic and acidic residues) spans 1316–1325 (PRRDSTEAPK). A phosphoserine mark is found at Ser1320, Ser1328, and Ser1329.

It belongs to the Integrator subunit 1 family. Component of the Integrator complex, composed of core subunits INTS1, INTS2, INTS3, INTS4, INTS5, INTS6, INTS7, INTS8, INTS9/RC74, INTS10, INTS11/CPSF3L, INTS12, INTS13, INTS14 and INTS15. The core complex associates with protein phosphatase 2A subunits PPP2CA and PPP2R1A, to form the Integrator-PP2A (INTAC) complex. Interacts with ESRRB, ESRRB is not a core component of the Integrator complex and this association is a bridge for the interaction with the multiprotein complex Integrator; attracts the transcriptional machinery.

The protein resides in the nucleus. It is found in the nucleus membrane. Component of the integrator complex, a multiprotein complex that terminates RNA polymerase II (Pol II) transcription in the promoter-proximal region of genes. The integrator complex provides a quality checkpoint during transcription elongation by driving premature transcription termination of transcripts that are unfavorably configured for transcriptional elongation: the complex terminates transcription by (1) catalyzing dephosphorylation of the C-terminal domain (CTD) of Pol II subunit POLR2A/RPB1 and SUPT5H/SPT5, (2) degrading the exiting nascent RNA transcript via endonuclease activity and (3) promoting the release of Pol II from bound DNA. The integrator complex is also involved in terminating the synthesis of non-coding Pol II transcripts, such as enhancer RNAs (eRNAs), small nuclear RNAs (snRNAs), telomerase RNAs and long non-coding RNAs (lncRNAs). Within the integrator complex, INTS1 is involved in the post-termination step: INTS1 displaces INTS3 and the SOSS factors, allowing the integrator complex to return to the closed conformation, ready to bind to the paused elongation complex for another termination cycle. Mediates recruitment of cytoplasmic dynein to the nuclear envelope, probably as component of the integrator complex. This Mus musculus (Mouse) protein is Integrator complex subunit 1.